Here is a 155-residue protein sequence, read N- to C-terminus: uncharacterized protein (155 aa).

4 helical membrane-spanning segments follow: residues 2-24 (TFLF…PPIF), 62-84 (AVVN…YLVL), 97-116 (VFLI…FLVV), and 131-148 (VVLL…KVFN).

The protein resides in the cell membrane. This is an uncharacterized protein from Aquifex aeolicus (strain VF5).